Reading from the N-terminus, the 203-residue chain is dITP/XTP pyrophosphatase (203 aa).

15-20 (SGNAGK) contacts substrate. 2 residues coordinate Mg(2+): E45 and D74. D74 serves as the catalytic Proton acceptor. Substrate contacts are provided by residues S75, 153–156 (FGYD), K176, and 181–182 (HR).

The protein belongs to the HAM1 NTPase family. As to quaternary structure, homodimer. Mg(2+) serves as cofactor.

The catalysed reaction is XTP + H2O = XMP + diphosphate + H(+). It catalyses the reaction dITP + H2O = dIMP + diphosphate + H(+). It carries out the reaction ITP + H2O = IMP + diphosphate + H(+). Its function is as follows. Pyrophosphatase that catalyzes the hydrolysis of nucleoside triphosphates to their monophosphate derivatives, with a high preference for the non-canonical purine nucleotides XTP (xanthosine triphosphate), dITP (deoxyinosine triphosphate) and ITP. Seems to function as a house-cleaning enzyme that removes non-canonical purine nucleotides from the nucleotide pool, thus preventing their incorporation into DNA/RNA and avoiding chromosomal lesions. The polypeptide is dITP/XTP pyrophosphatase (Prochlorococcus marinus (strain MIT 9313)).